Here is a 207-residue protein sequence, read N- to C-terminus: Outer-membrane lipoprotein LolB (207 aa).

Residues methionine 1–alanine 21 form the signal peptide. A lipid anchor (N-palmitoyl cysteine) is attached at cysteine 22. A lipid anchor (S-diacylglycerol cysteine) is attached at cysteine 22.

Belongs to the LolB family. Monomer.

The protein localises to the cell outer membrane. Functionally, plays a critical role in the incorporation of lipoproteins in the outer membrane after they are released by the LolA protein. The chain is Outer-membrane lipoprotein LolB from Yersinia pseudotuberculosis serotype IB (strain PB1/+).